We begin with the raw amino-acid sequence, 306 residues long: Aspartate carbamoyltransferase catalytic subunit (306 aa).

The carbamoyl phosphate site is built by arginine 54 and threonine 55. Lysine 83 lines the L-aspartate pocket. Residues arginine 104, histidine 132, and glutamine 135 each coordinate carbamoyl phosphate. The L-aspartate site is built by arginine 165 and arginine 227. Residues leucine 266 and proline 267 each coordinate carbamoyl phosphate.

It belongs to the aspartate/ornithine carbamoyltransferase superfamily. ATCase family. In terms of assembly, heterododecamer (2C3:3R2) of six catalytic PyrB chains organized as two trimers (C3), and six regulatory PyrI chains organized as three dimers (R2).

The enzyme catalyses carbamoyl phosphate + L-aspartate = N-carbamoyl-L-aspartate + phosphate + H(+). Its pathway is pyrimidine metabolism; UMP biosynthesis via de novo pathway; (S)-dihydroorotate from bicarbonate: step 2/3. In terms of biological role, catalyzes the condensation of carbamoyl phosphate and aspartate to form carbamoyl aspartate and inorganic phosphate, the committed step in the de novo pyrimidine nucleotide biosynthesis pathway. The chain is Aspartate carbamoyltransferase catalytic subunit from Clostridium novyi (strain NT).